We begin with the raw amino-acid sequence, 104 residues long: Large ribosomal subunit protein uL24 (104 aa).

The protein belongs to the universal ribosomal protein uL24 family. Part of the 50S ribosomal subunit.

Functionally, one of two assembly initiator proteins, it binds directly to the 5'-end of the 23S rRNA, where it nucleates assembly of the 50S subunit. Its function is as follows. One of the proteins that surrounds the polypeptide exit tunnel on the outside of the subunit. This Corynebacterium aurimucosum (strain ATCC 700975 / DSM 44827 / CIP 107346 / CN-1) (Corynebacterium nigricans) protein is Large ribosomal subunit protein uL24.